A 329-amino-acid chain; its full sequence is Cuticle collagen 6 (329 aa).

5 triple-helical region regions span residues 142–171, 189–212, 216–248, 253–279, and 282–320; these read GAAG…NGRD, GAPG…PGEP, GKSG…AGRL, GPQG…DGQS, and GPPG…CGHC. The disordered stretch occupies residues 146–329; sequence PPGPEGPPGN…CPPPRTPPGY (184 aa). A compositionally biased stretch (basic and acidic residues) spans 156–173; it reads DGKDGRNGNDGKNGRDAE. The segment covering 187 to 199 has biased composition (low complexity); sequence PTGAPGPMGAMGP. The segment covering 200-212 has biased composition (pro residues); that stretch reads KGPPGPKGSPGEP. A compositionally biased stretch (pro residues) spans 251 to 272; the sequence is VPGPQGAPGKPGPIGPPGPKGN. A compositionally biased stretch (low complexity) spans 273–282; the sequence is PGPDGQSYQG. The span at 320–329 shows a compositional bias: pro residues; it reads CPPPRTPPGY.

It belongs to the cuticular collagen family. As to quaternary structure, collagen polypeptide chains are complexed within the cuticle by disulfide bonds and other types of covalent cross-links.

Nematode cuticles are composed largely of collagen-like proteins. The cuticle functions both as an exoskeleton and as a barrier to protect the worm from its environment. The chain is Cuticle collagen 6 from Caenorhabditis elegans.